Here is a 99-residue protein sequence, read N- to C-terminus: NADH-quinone oxidoreductase subunit K (99 aa).

The next 3 membrane-spanning stretches (helical) occupy residues Pro2–Leu22, Leu28–Phe48, and Ile60–Ile80.

This sequence belongs to the complex I subunit 4L family. In terms of assembly, NDH-1 is composed of 14 different subunits. Subunits NuoA, H, J, K, L, M, N constitute the membrane sector of the complex.

It localises to the cell inner membrane. The catalysed reaction is a quinone + NADH + 5 H(+)(in) = a quinol + NAD(+) + 4 H(+)(out). NDH-1 shuttles electrons from NADH, via FMN and iron-sulfur (Fe-S) centers, to quinones in the respiratory chain. The immediate electron acceptor for the enzyme in this species is believed to be ubiquinone. Couples the redox reaction to proton translocation (for every two electrons transferred, four hydrogen ions are translocated across the cytoplasmic membrane), and thus conserves the redox energy in a proton gradient. This chain is NADH-quinone oxidoreductase subunit K, found in Anaeromyxobacter dehalogenans (strain 2CP-C).